The chain runs to 311 residues: Ribonuclease HIII (311 aa).

The RNase H type-2 domain maps to methionine 95–lysine 311. A divalent metal cation contacts are provided by aspartate 101, glutamate 102, and aspartate 206.

This sequence belongs to the RNase HII family. RnhC subfamily. Mn(2+) serves as cofactor. It depends on Mg(2+) as a cofactor.

Its subcellular location is the cytoplasm. The catalysed reaction is Endonucleolytic cleavage to 5'-phosphomonoester.. Its function is as follows. Endonuclease that specifically degrades the RNA of RNA-DNA hybrids. The chain is Ribonuclease HIII from Bacillus anthracis (strain A0248).